A 258-amino-acid polypeptide reads, in one-letter code: Protein OS-9 homolog (258 aa).

The signal sequence occupies residues 1-18 (MNWTSLVYLWFIFKSIFA). 3 N-linked (GlcNAc...) asparagine glycosylation sites follow: N2, N51, and N70. The 124-residue stretch at 114 to 237 (TSCVFSFNLH…HINVPKLCSL (124 aa)) folds into the MRH domain. C116 and C132 form a disulfide bridge. 2 residues coordinate a mannooligosaccharide derivative: W127 and Q139. An N-linked (GlcNAc...) asparagine glycan is attached at N165. Intrachain disulfides connect C193-C223 and C208-C235. 4 residues coordinate a mannooligosaccharide derivative: D194, R200, E219, and Y225.

The protein belongs to the OS-9 family. As to quaternary structure, interacts with missfolded ER lumenal proteins.

It localises to the endoplasmic reticulum membrane. Functionally, lectin involved in the quality control of the secretory pathway. As a member of the endoplasmic reticulum-associated degradation lumenal (ERAD-L) surveillance system, targets misfolded endoplasmic reticulum lumenal glycoproteins for degradation. This Candida albicans (strain SC5314 / ATCC MYA-2876) (Yeast) protein is Protein OS-9 homolog (YOS9).